The chain runs to 171 residues: Protein-export protein SecB (171 aa).

It belongs to the SecB family. As to quaternary structure, homotetramer, a dimer of dimers. One homotetramer interacts with 1 SecA dimer.

The protein resides in the cytoplasm. Its function is as follows. One of the proteins required for the normal export of preproteins out of the cell cytoplasm. It is a molecular chaperone that binds to a subset of precursor proteins, maintaining them in a translocation-competent state. It also specifically binds to its receptor SecA. This Gluconacetobacter diazotrophicus (strain ATCC 49037 / DSM 5601 / CCUG 37298 / CIP 103539 / LMG 7603 / PAl5) protein is Protein-export protein SecB.